The primary structure comprises 210 residues: Ribosomal RNA small subunit methyltransferase G (210 aa).

Residues G74, F79, 127–128 (IE), and R143 contribute to the S-adenosyl-L-methionine site.

This sequence belongs to the methyltransferase superfamily. RNA methyltransferase RsmG family.

Its subcellular location is the cytoplasm. The enzyme catalyses guanosine(527) in 16S rRNA + S-adenosyl-L-methionine = N(7)-methylguanosine(527) in 16S rRNA + S-adenosyl-L-homocysteine. Its function is as follows. Specifically methylates the N7 position of guanine in position 527 of 16S rRNA. The chain is Ribosomal RNA small subunit methyltransferase G from Chelativorans sp. (strain BNC1).